The sequence spans 780 residues: MARLSSRELALERRKALTTSGKKSSVAAGDGANRVRTASDVRPTRTDAAAAVEPTAPAVSAPVKPTVSFTPASPSSSSHVKPQRHPSRDLVLARRDALSRRGKTADTSRDRNRADVARQTQAAAPVAASAEEQKTCGCGGKRAAGKVQLSAPTTSLKPRSDRRSAAPKRRAIENPSRALVLARREAMAKHGKTAGKQPTSAAAVARQANPDLTSRELAQQVRELRTKAGARNKQSAGATRPTGPNRHGAKQAAAADAHWKVGESTTSTGQTVTGTQANRSVKTTGNEASTCRSITGTEYLGAEVFQTFCQQAPEPTTPAKVRVTATSHGNRVTGNEVGRSEKVTGDEPGTCKSVTGTEYISANQSAAYCGSSQVSQRKVGHSLTQQGRPVSGVMVGRSSSVTGDEAGAGRSLTGDQYLGSDPLPDGRPAAKVGQSGTLSGTGVTGTLVGRSSQVTGNEFGSCHRVTGDQYISAEQVNAFCGSKPEPEAAKVGFSITNRNQVVSGTRTGRSERVTGDEPGTCKAVTGTPYAGLENAGQHCGTSAVQAIRERTPVRLGTPSAAMTGIQPGVGGVMTGDEKGACEAVTGTPYVGADQLATACGNEAPAGTDSHGQAPEGAAWTRFSVMSPARAAQQQRDDQGAVTGTSYEQGNRITGPFDLAGGKVTGTEQFRFDNREFQRRQFQPTVAVVSEPAEQPASRVTGEGSSTKITGDDWDRGEHVTGTEGVSARRRNPTRPGPMSATVPHERKRNEENEWPVSRVTGSSGNTEKGSLITVSGGARG.

The span at 1–15 (MARLSSRELALERRK) shows a compositional bias: basic and acidic residues. Disordered regions lie at residues 1 to 173 (MARL…RAIE), 189 to 212 (KHGK…NPDL), 226 to 281 (TKAG…NRSV), 330 to 349 (NRVT…DEPG), and 382 to 444 (SLTQ…TGVT). Residues 5–24 (SSRELALERRKALTTSGKKS) form an N-repeat 1 repeat. Low complexity predominate over residues 48 to 78 (AAAAVEPTAPAVSAPVKPTVSFTPASPSSSS). An N-repeat 2 repeat occupies 86–105 (PSRDLVLARRDALSRRGKTA). Positions 86–116 (PSRDLVLARRDALSRRGKTADTSRDRNRADV) are enriched in basic and acidic residues. Over residues 117 to 130 (ARQTQAAAPVAASA) the composition is skewed to low complexity. N-repeat repeat units lie at residues 175–194 (PSRA…GKTA) and 213–235 (TSRE…NKQS). 6 M-repeat repeats span residues 260-309 (KVGE…QTFC), 320-369 (KVRV…AAYC), 378-417 (KVGH…GDQY), 431-480 (KVGQ…NAFC), 490-535 (KVGF…LENA), and 541-599 (TSAV…ATAC). The interval 260–608 (KVGESTTSTG…CGNEAPAGTD (349 aa)) is middle region. A compositionally biased stretch (low complexity) spans 264-276 (STTSTGQTVTGTQ). 2 stretches are compositionally biased toward low complexity: residues 387 to 403 (GRPV…SVTG) and 432 to 444 (VGQS…TGVT). The segment at 609–749 (SHGQAPEGAA…ATVPHERKRN (141 aa)) is C-terminal domain. C-repeat repeat units follow at residues 623–669 (SVMS…TEQF) and 693–726 (EQPA…EGVS). 2 disordered regions span residues 631-661 (AQQQ…LAGG) and 686-780 (AVVS…GARG). Residues 641–651 (VTGTSYEQGNR) show a composition bias toward polar residues. Over residues 709 to 720 (TGDDWDRGEHVT) the composition is skewed to basic and acidic residues. The segment at 750-780 (EENEWPVSRVTGSSGNTEKGSLITVSGGARG) is C-terminal peptide. Residues 759–768 (VTGSSGNTEK) show a composition bias toward polar residues.

It belongs to the CsoS2 family. As to quaternary structure, interacts via its N-terminal repeats with RuBisCO. Interacts with the major shell protein CsoS1. Unlike H.neapolitanus and predictions for P.marinus strain MIT 9313, this protein is not thought to have ribosomal frameshifting.

Its function is as follows. Required for alpha-carboxysome (Cb) assembly, mediates interaction between RuBisCO and the carboxysome shell. The protein is probably intrinsically disordered. The C-terminal repeats act as the encapsulation signal to target proteins to the Cb; they are necessary and sufficient to target both CsoS2 and foreign proteins to the Cb. The N-terminal repeats of this protein bind simultaneously to both subunits of RuBisCO. Probably also interacts with the major shell proteins (CsoS1); that interaction would increase the local concentration of CsoS2 so that it can condense RuBisCO and full carboxysomes can be formed. This chain is Carboxysome assembly protein CsoS2, found in Parasynechococcus marenigrum (strain WH8102).